A 389-amino-acid chain; its full sequence is Protein DDI1 homolog 1 (389 aa).

The segment at 109 to 132 (SSSSAQSAQRTRRVEQDDEGEKSM) is disordered. Asp-261 is a catalytic residue.

The protein belongs to the DDI1 family. In terms of tissue distribution, expressed in most tissues.

The protein resides in the cytoplasm. It localises to the nucleus. Its function is as follows. Aspartic protease. Required for the cleavage and activation of transcription factors such as isoform a of the transcription factor skn-1, which in turn regulates the expression of proteasomal subunits such as rpt-3. Plays a key role in the degradation of the potassium channel slo-1, perhaps acting directly, in cleaving slo-1 upstream of the ER-associated degradation pathway (ERAD), and also indirectly, via activation of the transcription factor skn-1, which mediates proteasomal homeostasis. This Caenorhabditis elegans protein is Protein DDI1 homolog 1.